Consider the following 175-residue polypeptide: Ribosome maturation factor RimM (175 aa).

The PRC barrel domain maps to 96–175 (EGDYYWHDLI…TIEVDWDAGF (80 aa)).

This sequence belongs to the RimM family. As to quaternary structure, binds ribosomal protein uS19.

Its subcellular location is the cytoplasm. Its function is as follows. An accessory protein needed during the final step in the assembly of 30S ribosomal subunit, possibly for assembly of the head region. Essential for efficient processing of 16S rRNA. May be needed both before and after RbfA during the maturation of 16S rRNA. It has affinity for free ribosomal 30S subunits but not for 70S ribosomes. This chain is Ribosome maturation factor RimM, found in Actinobacillus succinogenes (strain ATCC 55618 / DSM 22257 / CCUG 43843 / 130Z).